Consider the following 714-residue polypeptide: MSLSSGGWTRASPPAQSSSSHLGHEASQSACSTVLMSVKVSVCHSGIRPLCLPGAGDESLRLQLSMDPGKAGEFRLALRDISATAAGRSVFIAEFDLKTVQYEVKTPLCHELSLATPPHDRISFKFRCEQEAQEWATVVMSSLREAHRVAISSSTEEGRLPPPPLATQSKAPMPRTEEICAELVSAIEAGDVRSASVCASSLAKQKAALSIQPSKRNYTDSEVCLAVVVEDASSSCCVSVKVFPHSTIGALKQQVFSDYGFHPRVQRWVIGQSLCSDHRSLASYGVQRDGDTAFLYLISARQARLSRGIYQQDQESALLMVPTTHQAHQEAVSNGPAALNTASRPYSTLPTRLHNSHNTLSNNAGGSERLGLSDIRDLINLELPQLNEALGPNRTSIQPGWACPTCTYINKPTRPGCEMCSADRPEGYTVPGNYRPDALELRRIQQEKEAIRQYQQARETERRENFARLVQMDGQDLVPNPERVECRICYVELESGEGVLLRECLHCFCKECLRSVILMSEDPQVACPYRDESYACDCVLQEREIRALVSVDDYQHWLQRGLSVAESRCEGSYHCATADCPGWCVYEDTVNTFHCPVCKKQNCLLCKAIHEGMNCKQYQDDLTARAINDSAARRTRDLLKTLVNSGEAMHCPQCGIIVQKKEGCDWLRCTVCHTEICWVTRGPRWGPKGPGDISGGCRCNVNKQRCHPKCQNCH.

Disordered regions lie at residues 1 to 23 and 152 to 172; these read MSLS…SHLG and SSST…SKAP. A compositionally biased stretch (polar residues) spans 14–23; the sequence is PAQSSSSHLG. A Ubiquitin-like domain is found at 225-301; it reads LAVVVEDASS…TAFLYLISAR (77 aa). A RanBP2-type zinc finger spans residues 394–426; it reads RTSIQPGWACPTCTYINKPTRPGCEMCSADRPE. Residues 482–710 are TRIAD supradomain; that stretch reads ERVECRICYV…VNKQRCHPKC (229 aa). Residues C486, C489, C504, H506, C509, C512, C527, C536, C575, C580, C595, C598, C603, C606, H610, C615, C651, and C654 each contribute to the Zn(2+) site. The RING-type 1 zinc finger occupies 486-536; the sequence is CRICYVELESGEGVLLRECLHCFCKECLRSVILMSEDPQVACPYRDESYAC. The IBR-type zinc finger occupies 555-615; it reads QHWLQRGLSV…CKAIHEGMNC (61 aa). The RING-type 2; atypical zinc-finger motif lies at 651-680; sequence CPQCGIIVQKKEGCDWLRCTVCHTEICWVT. C664 is an active-site residue. Zn(2+) contacts are provided by C669 and C672.

This sequence belongs to the RBR family. Component of the LUBAC complex (linear ubiquitin chain assembly complex).

The catalysed reaction is [E2 ubiquitin-conjugating enzyme]-S-ubiquitinyl-L-cysteine + [acceptor protein]-L-lysine = [E2 ubiquitin-conjugating enzyme]-L-cysteine + [acceptor protein]-N(6)-ubiquitinyl-L-lysine.. It functions in the pathway protein modification; protein ubiquitination. In terms of biological role, component of the LUBAC complex which conjugates linear ('Met-1'-linked) polyubiquitin chains to substrates and plays a key role in NF-kappa-B activation and regulation of inflammation. LUBAC conjugates linear polyubiquitin to ikbkg and RIPK1 and is involved in activation of the canonical NF-kappa-B and the JNK signaling pathways. Linear ubiquitination mediated by the LUBAC complex interferes with TNF-induced cell death and thereby prevents inflammation. LUBAC is recruited to the TNF-R1 signaling complex (TNF-RSC) to conjugate linear polyubiquitin to ikbkg and possibly other components contributing to the stability of the complex. The LUBAC complex is also involved in innate immunity by conjugating linear polyubiquitin chains at the surface of bacteria invading the cytosol to form the ubiquitin coat surrounding bacteria. LUBAC is not able to initiate formation of the bacterial ubiquitin coat, and can only promote formation of linear polyubiquitins on pre-existing ubiquitin. The bacterial ubiquitin coat acts as an 'eat-me' signal for xenophagy and promotes NF-kappa-B activation. Binds polyubiquitin of different linkage types. The polypeptide is RanBP-type and C3HC4-type zinc finger-containing protein 1 (rbck1) (Danio rerio (Zebrafish)).